The sequence spans 274 residues: Copper chaperone for superoxide dismutase (274 aa).

The region spanning 11 to 74 is the HMA domain; that stretch reads LCTLEFAVQM…LLEGTGRQAV (64 aa). C22 and C25 together coordinate Cu cation. K76 is covalently cross-linked (Glycyl lysine isopeptide (Lys-Gly) (interchain with G-Cter in ubiquitin)). A superoxide dismutase-like region spans residues 88–234; sequence AAVAILGGPG…LACGIIARSA (147 aa). C141 and C227 are joined by a disulfide. H147, H155, H164, and D167 together coordinate Zn(2+). Glycyl lysine isopeptide (Lys-Gly) (interchain with G-Cter in ubiquitin) cross-links involve residues K189, K216, and K241. Residues C244 and C246 each contribute to the Cu cation site. The residue at position 267 (S267) is a Phosphoserine.

In the C-terminal section; belongs to the Cu-Zn superoxide dismutase family. In terms of assembly, homodimer, and heterodimer with SOD1. Interacts with COMMD1. Interacts with XIAP/BIRC4. Interacts with SLC31A1(via C-terminal domain); this interaction is Cu(1+)-mediated. The heterodimer CCS:SOD1 interacts with SLC31A1; this heterotrimer is Cu(1+)-mediated and its maintenance is regulated through SOD1 activation. Requires Cu(2+) as cofactor. It depends on Zn(2+) as a cofactor. Post-translationally, ubiquitinion by XIAP/BIRC4 leads to enhancement of its chaperone activity toward its physiologic target, SOD1, rather than proteasomal degradation. XIAP/BIRC4 preferentially ubiquitinates at Lys-241. As to expression, ubiquitous.

The protein resides in the cytoplasm. Its function is as follows. Delivers copper to copper zinc superoxide dismutase (SOD1). This chain is Copper chaperone for superoxide dismutase, found in Homo sapiens (Human).